Here is a 424-residue protein sequence, read N- to C-terminus: Probable threonylcarbamoyladenosine tRNA methylthiotransferase (424 aa).

Positions 1–106 (MRVAIETYGC…VVDAVYSALN (106 aa)) constitute an MTTase N-terminal domain. [4Fe-4S] cluster contacts are provided by Cys-10, Cys-44, Cys-73, Cys-143, Cys-147, and Cys-150. The region spanning 129–359 (LRENAIAIVS…TDLMRKIGLE (231 aa)) is the Radical SAM core domain. One can recognise a TRAM domain in the interval 362-420 (KRFVGKKLRVLVTKEGKNGRNLARMNSYRAVVTEGAVGEFVEVKIKDCRFNYLIGQLAA).

Belongs to the methylthiotransferase family. CDKAL1 subfamily. [4Fe-4S] cluster is required as a cofactor.

The enzyme catalyses N(6)-L-threonylcarbamoyladenosine(37) in tRNA + (sulfur carrier)-SH + AH2 + 2 S-adenosyl-L-methionine = 2-methylsulfanyl-N(6)-L-threonylcarbamoyladenosine(37) in tRNA + (sulfur carrier)-H + 5'-deoxyadenosine + L-methionine + A + S-adenosyl-L-homocysteine + 2 H(+). Catalyzes the methylthiolation of N6-threonylcarbamoyladenosine (t(6)A), leading to the formation of 2-methylthio-N6-threonylcarbamoyladenosine (ms(2)t(6)A) at position 37 in tRNAs that read codons beginning with adenine. In Archaeoglobus fulgidus (strain ATCC 49558 / DSM 4304 / JCM 9628 / NBRC 100126 / VC-16), this protein is Probable threonylcarbamoyladenosine tRNA methylthiotransferase.